A 217-amino-acid polypeptide reads, in one-letter code: Uridylate kinase (217 aa).

Position 6–10 (6–10 (KISGR)) interacts with ATP. Glycine 38 contacts UMP. ATP contacts are provided by glycine 39 and arginine 43. UMP-binding positions include aspartate 60 and 107 to 113 (FQPGQST). 3 residues coordinate ATP: asparagine 134, tyrosine 139, and aspartate 142.

It belongs to the UMP kinase family. Homohexamer.

Its subcellular location is the cytoplasm. It carries out the reaction UMP + ATP = UDP + ADP. It participates in pyrimidine metabolism; CTP biosynthesis via de novo pathway; UDP from UMP (UMPK route): step 1/1. Inhibited by UTP. Catalyzes the reversible phosphorylation of UMP to UDP. The chain is Uridylate kinase from Pyrobaculum arsenaticum (strain DSM 13514 / JCM 11321 / PZ6).